The sequence spans 89 residues: Small ribosomal subunit protein uS15 (89 aa).

Belongs to the universal ribosomal protein uS15 family. In terms of assembly, part of the 30S ribosomal subunit. Forms a bridge to the 50S subunit in the 70S ribosome, contacting the 23S rRNA.

One of the primary rRNA binding proteins, it binds directly to 16S rRNA where it helps nucleate assembly of the platform of the 30S subunit by binding and bridging several RNA helices of the 16S rRNA. Functionally, forms an intersubunit bridge (bridge B4) with the 23S rRNA of the 50S subunit in the ribosome. The polypeptide is Small ribosomal subunit protein uS15 (Geobacillus stearothermophilus (Bacillus stearothermophilus)).